Consider the following 304-residue polypeptide: RNA polymerase II holoenzyme cyclin-like subunit (304 aa).

The region spanning 43 to 174 is the Cyclin N-terminal domain; it reads TIHDSKANKQ…LIEELQSYLI (132 aa).

The protein belongs to the cyclin family. Cyclin C subfamily. Component of the SRB8-11 complex, a regulatory module of the Mediator complex.

The protein resides in the nucleus. Component of the SRB8-11 complex. The SRB8-11 complex is a regulatory module of the Mediator complex which is itself involved in regulation of basal and activated RNA polymerase II-dependent transcription. The SRB8-11 complex may be involved in the transcriptional repression of a subset of genes regulated by Mediator. It may inhibit the association of the Mediator complex with RNA polymerase II to form the holoenzyme complex. The SRB8-11 complex phosphorylates the C-terminal domain (CTD) of the largest subunit of RNA polymerase II. The sequence is that of RNA polymerase II holoenzyme cyclin-like subunit (SSN8) from Kluyveromyces lactis (strain ATCC 8585 / CBS 2359 / DSM 70799 / NBRC 1267 / NRRL Y-1140 / WM37) (Yeast).